We begin with the raw amino-acid sequence, 352 residues long: Protein-glutamate methylesterase/protein-glutamine glutaminase (352 aa).

Positions 5-122 (RAIVIDDSAF…SLDIRNVEDE (118 aa)) constitute a Response regulatory domain. Asp56 bears the 4-aspartylphosphate mark. One can recognise a CheB-type methylesterase domain in the interval 163–352 (RSIVSIGTST…IPSLIVKQLT (190 aa)). Residues Ser171, His198, and Asp294 contribute to the active site.

This sequence belongs to the CheB family. Post-translationally, phosphorylated by CheA. Phosphorylation of the N-terminal regulatory domain activates the methylesterase activity.

It is found in the cytoplasm. It catalyses the reaction [protein]-L-glutamate 5-O-methyl ester + H2O = L-glutamyl-[protein] + methanol + H(+). The catalysed reaction is L-glutaminyl-[protein] + H2O = L-glutamyl-[protein] + NH4(+). In terms of biological role, involved in chemotaxis. Part of a chemotaxis signal transduction system that modulates chemotaxis in response to various stimuli. Catalyzes the demethylation of specific methylglutamate residues introduced into the chemoreceptors (methyl-accepting chemotaxis proteins or MCP) by CheR. Also mediates the irreversible deamidation of specific glutamine residues to glutamic acid. This is Protein-glutamate methylesterase/protein-glutamine glutaminase from Oceanobacillus iheyensis (strain DSM 14371 / CIP 107618 / JCM 11309 / KCTC 3954 / HTE831).